The primary structure comprises 71 residues: Hainantoxin-X-2 (71 aa).

A signal peptide spans 1–26; that stretch reads MKTAIFTVVLALAVFAVLCLVVSTHA. A propeptide spanning residues 27–43 is cleaved from the precursor; it reads ERHSKTDMEDSPMIQER. 2 disulfides stabilise this stretch: cysteine 52–cysteine 65 and cysteine 61–cysteine 70.

Belongs to the neurotoxin 36 family. 02 subfamily. As to expression, expressed by the venom gland.

The protein localises to the secreted. Functionally, reversibly blocks N-type calcium channels (Cav2.2/CACNA1B) in rat dorsal root ganglion cells. Elicits no toxic symptoms in either vertebrates or invertebrates during a period of 48 hours post-injection, when it was assayed in vivo by direct injection into mice and cockroaches. The protein is Hainantoxin-X-2 of Cyriopagopus hainanus (Chinese bird spider).